The chain runs to 88 residues: Putative membrane protein insertion efficiency factor (88 aa).

The tract at residues 64–88 is disordered; that stretch reads GVDPVPKKSSSKKTSSTTACGCGHS.

Belongs to the UPF0161 family.

The protein resides in the cell inner membrane. Its function is as follows. Could be involved in insertion of integral membrane proteins into the membrane. The protein is Putative membrane protein insertion efficiency factor of Herminiimonas arsenicoxydans.